Here is a 144-residue protein sequence, read N- to C-terminus: NADH dehydrogenase [ubiquinone] 1 alpha subcomplex subunit 13 (144 aa).

A helical membrane pass occupies residues 30–51 (LSGYSMLAIGIGTLIYGHWSIM).

It belongs to the complex I NDUFA13 subunit family. As to quaternary structure, complex I is composed of 45 different subunits. Interacts with CARD15, but not with CARD4. Interacts with STAT3, but not with STAT1, STAT2 and STAT5A. Interacts with OLFM4.

The protein resides in the mitochondrion inner membrane. Its subcellular location is the nucleus. In terms of biological role, accessory subunit of the mitochondrial membrane respiratory chain NADH dehydrogenase (Complex I), that is believed not to be involved in catalysis. Complex I functions in the transfer of electrons from NADH to the respiratory chain. The immediate electron acceptor for the enzyme is believed to be ubiquinone. Involved in the interferon/all-trans-retinoic acid (IFN/RA) induced cell death. This apoptotic activity is inhibited by interaction with viral IRF1. Prevents the transactivation of STAT3 target genes. May play a role in CARD15-mediated innate mucosal responses and serve to regulate intestinal epithelial cell responses to microbes. This is NADH dehydrogenase [ubiquinone] 1 alpha subcomplex subunit 13 (NDUFA13) from Gorilla gorilla gorilla (Western lowland gorilla).